The sequence spans 73 residues: Sec-independent protein translocase protein TatA (73 aa).

A helical membrane pass occupies residues 1 to 21 (MGLSWQQLLILLLVVVVIFGT).

The protein belongs to the TatA/E family. In terms of assembly, the Tat system comprises two distinct complexes: a TatABC complex, containing multiple copies of TatA, TatB and TatC subunits, and a separate TatA complex, containing only TatA subunits. Substrates initially bind to the TatABC complex, which probably triggers association of the separate TatA complex to form the active translocon.

Its subcellular location is the cell inner membrane. Its function is as follows. Part of the twin-arginine translocation (Tat) system that transports large folded proteins containing a characteristic twin-arginine motif in their signal peptide across membranes. TatA could form the protein-conducting channel of the Tat system. In Histophilus somni (strain 129Pt) (Haemophilus somnus), this protein is Sec-independent protein translocase protein TatA.